Reading from the N-terminus, the 210-residue chain is Thymidylate kinase (210 aa).

Residue 10–17 coordinates ATP; sequence GLEGAGKS.

The protein belongs to the thymidylate kinase family.

The enzyme catalyses dTMP + ATP = dTDP + ADP. Phosphorylation of dTMP to form dTDP in both de novo and salvage pathways of dTTP synthesis. The protein is Thymidylate kinase of Haemophilus influenzae (strain PittGG).